The primary structure comprises 1030 residues: Peroxisomal ATPase PEX6 (1030 aa).

Positions 478–683 (VLLHSTTNNV…VETARMTATA (206 aa)) are AAA-cassette D1. The tract at residues 767-956 (GILFYGPPGT…CSDAMLNAMS (190 aa)) is AAA-cassette D2. Residue 772–779 (GPPGTGKT) participates in ATP binding.

This sequence belongs to the AAA ATPase family. In terms of assembly, interacts with PEX1; forming the PEX1-PEX6 AAA ATPase complex, which is composed of a heterohexamer formed by a trimer of PEX1-PEX6 dimers. Interacts with PEX15; anchors PEX1-PEX6 heterooligomers to the peroxisomal membrane and mediates their association with the peroxisomal importomer. Interacts with UBP15.

The protein resides in the cytoplasm. It localises to the cytosol. The protein localises to the peroxisome membrane. It carries out the reaction ATP + H2O = ADP + phosphate + H(+). In terms of biological role, component of the PEX1-PEX6 AAA ATPase complex, a protein dislocase complex that mediates the ATP-dependent extraction of the PEX5 receptor from peroxisomal membranes, an essential step for PEX5 recycling. Specifically recognizes PEX5 monoubiquitinated at 'Cys-6', and pulls it out of the peroxisome lumen through the PEX2-PEX10-PEX12 retrotranslocation channel. Extraction by the PEX1-PEX6 AAA ATPase complex is accompanied by unfolding of the TPR repeats and release of bound cargo from PEX5. This is Peroxisomal ATPase PEX6 from Saccharomyces cerevisiae (strain ATCC 204508 / S288c) (Baker's yeast).